The primary structure comprises 285 residues: Dermonecrotic toxin LlSicTox-alphaIII1ii (285 aa).

Residue H12 is part of the active site. E32 and D34 together coordinate Mg(2+). The Nucleophile role is filled by H47. Residues C51 and C57 are joined by a disulfide bond. D91 is a binding site for Mg(2+).

Belongs to the arthropod phospholipase D family. Class I subfamily. Mg(2+) is required as a cofactor. In terms of tissue distribution, expressed by the venom gland.

Its subcellular location is the secreted. It catalyses the reaction an N-(acyl)-sphingosylphosphocholine = an N-(acyl)-sphingosyl-1,3-cyclic phosphate + choline. The enzyme catalyses an N-(acyl)-sphingosylphosphoethanolamine = an N-(acyl)-sphingosyl-1,3-cyclic phosphate + ethanolamine. It carries out the reaction a 1-acyl-sn-glycero-3-phosphocholine = a 1-acyl-sn-glycero-2,3-cyclic phosphate + choline. The catalysed reaction is a 1-acyl-sn-glycero-3-phosphoethanolamine = a 1-acyl-sn-glycero-2,3-cyclic phosphate + ethanolamine. In terms of biological role, dermonecrotic toxins cleave the phosphodiester linkage between the phosphate and headgroup of certain phospholipids (sphingolipid and lysolipid substrates), forming an alcohol (often choline) and a cyclic phosphate. This toxin acts on sphingomyelin (SM) with high activity (56.8 U/mg). It may also act on ceramide phosphoethanolamine (CPE), lysophosphatidylcholine (LPC) and lysophosphatidylethanolamine (LPE), but not on lysophosphatidylserine (LPS), and lysophosphatidylglycerol (LPG). It acts by transphosphatidylation, releasing exclusively cyclic phosphate products as second products. Induces dermonecrosis, hemolysis, increased vascular permeability, edema, inflammatory response, and platelet aggregation. Is lethal to mice. This chain is Dermonecrotic toxin LlSicTox-alphaIII1ii, found in Loxosceles laeta (South American recluse spider).